The chain runs to 147 residues: Mucoricin (147 aa).

Residues 4–143 (EEGRLFFIKS…VSANQRWELV (140 aa)) form the Ricin B-type lectin domain.

This sequence belongs to the ribosome-inactivating protein family. Type 1 RIP subfamily.

It is found in the secreted. The enzyme catalyses Endohydrolysis of the N-glycosidic bond at one specific adenosine on the 28S rRNA.. Functionally, N-glycosylase that inhibits protein synthesis in the host by depurinating ribosomal rRNA, and thus acts as a ribosomal inactivating protein (RIP). Promotes vascular permeability in the host and induces necrosis and apoptosis of host alveolar epithelial cells. In Rhizopus delemar (strain RA 99-880 / ATCC MYA-4621 / FGSC 9543 / NRRL 43880) (Mucormycosis agent), this protein is Mucoricin.